Here is a 125-residue protein sequence, read N- to C-terminus: Phosphoribosyl-AMP cyclohydrolase (125 aa).

Residue Asp74 participates in Mg(2+) binding. Residue Cys75 participates in Zn(2+) binding. Residues Asp76 and Asp78 each contribute to the Mg(2+) site. Cys92 and Cys99 together coordinate Zn(2+).

Belongs to the PRA-CH family. As to quaternary structure, homodimer. Mg(2+) is required as a cofactor. The cofactor is Zn(2+).

Its subcellular location is the cytoplasm. It catalyses the reaction 1-(5-phospho-beta-D-ribosyl)-5'-AMP + H2O = 1-(5-phospho-beta-D-ribosyl)-5-[(5-phospho-beta-D-ribosylamino)methylideneamino]imidazole-4-carboxamide. It functions in the pathway amino-acid biosynthesis; L-histidine biosynthesis; L-histidine from 5-phospho-alpha-D-ribose 1-diphosphate: step 3/9. In terms of biological role, catalyzes the hydrolysis of the adenine ring of phosphoribosyl-AMP. This chain is Phosphoribosyl-AMP cyclohydrolase, found in Citrifermentans bemidjiense (strain ATCC BAA-1014 / DSM 16622 / JCM 12645 / Bem) (Geobacter bemidjiensis).